The primary structure comprises 798 residues: MLMLMLVAAVTMWLRPLVTAQLCRSRTVRTGKVFNLIQDVQGDRLYFHPTTTRLIKHPCEKNIALYLGKQVFFTMDNFETSLLPFTIPTSMQVGVPEVTSAHFAGSLLLLVVDQKVYIYDYENNSWSMSLGIKHPVTHVSGDNCCYTGSLFCVHVSNLVFAYFRGDQISQTYIYYSNTGGFSFWKYHYDRQAEIIGSLGGIFHFFSLSQVAMLVVNQGKGMFKYSDHPLNRSFGLSFDYNGTLDILIAPGQRGILLLWFENSLLFSHNAGQLVDTVRVKKGDQTLFSSIFEAKITIHNIAVTENELAVITREDNLYYGNLGIVPSSIIKFADQYIWSEDVALMFRSPGTLEILTPLRDTAFPAFDFQKCLVNIQALLMDPELHVGKCKIEFLTGEFIYRMYTIDMHSQLELTASLIPQPGTSLIPLVMVSNPHSLGFQATFYENGYTSDGNTKYKLDIFLKQQQHWGRTDSNFTSSLKKATMSTLTVDIANKEISCVDIKPLSTLISVGCDLDKKIVIQNKVSACSMGILDPLTLQDNYSFIIEKEFYDPGFQGQQSSEDLHVFYSYQQLGCPLLVYYDTLWKPVVELWRKDSFQEVIDAEYVLLEVNGQFSYSYSLTAQSAMCTSQPQNWTTMIKEFGGPFFWNRENYVSCHDPNNNAPLRWPDVQYQILGGRTANQIIFGHNGFYVFYISIVDPYYSYCQLETIFSIYVYGAFPVQLVSAGVVILLIISSILGSVWLAYKTPKLLRTARGRRIKKCATQLCRRCKTVCQFRASATARAGTEPPGRHRTPHGGRSDH.

The signal sequence occupies residues 1-20 (MLMLMLVAAVTMWLRPLVTA). Residues 21 to 723 (QLCRSRTVRT…AFPVQLVSAG (703 aa)) are Extracellular-facing. 7 disulfide bridges follow: C23/C369, C59/C145, C144/C152, C387/C496, C510/C701, C525/C572, and C624/C652. N-linked (GlcNAc...) asparagine glycosylation occurs at N123. N230, N240, N472, N538, and N630 each carry an N-linked (GlcNAc...) asparagine glycan. The helical transmembrane segment at 724–745 (VVILLIISSILGSVWLAYKTPK) threads the bilayer. Topologically, residues 746–798 (LLRTARGRRIKKCATQLCRRCKTVCQFRASATARAGTEPPGRHRTPHGGRSDH) are cytoplasmic.

This sequence belongs to the CATSPERD family. Component of the CatSper complex or CatSpermasome composed of the core pore-forming members CATSPER1, CATSPER2, CATSPER3 and CATSPER4 as well as auxiliary members CATSPERB, CATSPERG, CATSPERD, CATSPERE, CATSPERZ, C2CD6/CATSPERT, TMEM249, TMEM262 and EFCAB9. HSPA1 may be an additional auxiliary complex member. The core complex members CATSPER1, CATSPER2, CATSPER3 and CATSPER4 form a heterotetrameric channel. The auxiliary CATSPERB, CATSPERG, CATSPERD and CATSPERE subunits form a pavilion-like structure over the pore which stabilizes the complex through interactions with CATSPER4, CATSPER3, CATSPER1 and CATSPER2 respectively. TMEM262/CATSPERH interacts with CATSPERB, further stabilizing the complex. C2CD6/CATSPERT interacts at least with CATSPERD and is required for targeting the CatSper complex in the flagellar membrane.

It is found in the cell projection. Its subcellular location is the cilium. The protein localises to the flagellum membrane. In terms of biological role, auxiliary component of the CatSper complex, a complex involved in sperm cell hyperactivation. Sperm cell hyperactivation is needed for sperm motility which is essential late in the preparation of sperm for fertilization. Required for CATSPER1 stability before intraflagellar transport and/or incorporation of the CatSper complex channel into the flagellar membrane. This is Cation channel sperm-associated auxiliary subunit delta from Homo sapiens (Human).